A 760-amino-acid polypeptide reads, in one-letter code: Photosystem I P700 chlorophyll a apoprotein A1 (760 aa).

A disordered region spans residues methionine 1–alanine 22. Residues serine 8–alanine 22 are compositionally biased toward basic and acidic residues. The next 8 helical transmembrane spans lie at isoleucine 76–alanine 99, leucine 162–histidine 185, methionine 201–alanine 225, isoleucine 309–tyrosine 327, arginine 368–tyrosine 391, leucine 407–valine 433, alanine 455–histidine 477, and leucine 551–leucine 569. Positions 593 and 602 each coordinate [4Fe-4S] cluster. Helical transmembrane passes span histidine 609–tryptophan 630 and isoleucine 674–phenylalanine 696. Histidine 685 serves as a coordination point for divinylchlorophyll a'. Divinyl chlorophyll a contacts are provided by methionine 693 and tyrosine 701. Position 702 (tryptophan 702) interacts with phylloquinone. The chain crosses the membrane as a helical span at residues alanine 734–alanine 754.

This sequence belongs to the PsaA/PsaB family. As to quaternary structure, the PsaA/B heterodimer binds the P700 divinyl chlorophyll special pair and subsequent electron acceptors. PSI consists of a core antenna complex that captures photons, and an electron transfer chain that converts photonic excitation into a charge separation. The cyanobacterial PSI reaction center is composed of one copy each of PsaA,B,C,D,E,F,I,J,K,L,M and X, and forms trimeric complexes. Requires PSI electron transfer chain: 5 divinyl chlorophyll a, 1 divinyl chlorophyll a', 2 phylloquinones and 3 4Fe-4S clusters. PSI core antenna: 90 divinyl chlorophyll a, 22 carotenoids, 3 phospholipids and 1 galactolipid. P700 is a divinyl chlorophyll a/divinyl chlorophyll a' dimer, A0 is one or more divinyl chlorophyll a, A1 is one or both phylloquinones and FX is a shared 4Fe-4S iron-sulfur center. as cofactor.

The protein localises to the cellular thylakoid membrane. The catalysed reaction is reduced [plastocyanin] + hnu + oxidized [2Fe-2S]-[ferredoxin] = oxidized [plastocyanin] + reduced [2Fe-2S]-[ferredoxin]. Functionally, psaA and PsaB bind P700, the primary electron donor of photosystem I (PSI), as well as the electron acceptors A0, A1 and FX. PSI is a plastocyanin/cytochrome c6-ferredoxin oxidoreductase, converting photonic excitation into a charge separation, which transfers an electron from the donor P700 chlorophyll pair to the spectroscopically characterized acceptors A0, A1, FX, FA and FB in turn. Oxidized P700 is reduced on the lumenal side of the thylakoid membrane by plastocyanin or cytochrome c6. This is Photosystem I P700 chlorophyll a apoprotein A1 from Prochlorococcus marinus (strain MIT 9515).